Reading from the N-terminus, the 159-residue chain is Phosphopantetheine adenylyltransferase (159 aa).

His-16 contributes to the ATP binding site. Substrate-binding residues include Lys-40, Met-72, and Arg-86. ATP-binding positions include 87-89 (GLR), Glu-97, and 122-128 (YQYLSAS).

Belongs to the bacterial CoaD family. In terms of assembly, homohexamer. It depends on Mg(2+) as a cofactor.

Its subcellular location is the cytoplasm. It carries out the reaction (R)-4'-phosphopantetheine + ATP + H(+) = 3'-dephospho-CoA + diphosphate. The protein operates within cofactor biosynthesis; coenzyme A biosynthesis; CoA from (R)-pantothenate: step 4/5. Its function is as follows. Reversibly transfers an adenylyl group from ATP to 4'-phosphopantetheine, yielding dephospho-CoA (dPCoA) and pyrophosphate. The sequence is that of Phosphopantetheine adenylyltransferase from Dehalococcoides mccartyi (strain CBDB1).